A 450-amino-acid polypeptide reads, in one-letter code: Phosphoglucosamine mutase (450 aa).

Ser102 (phosphoserine intermediate) is an active-site residue. Residues Ser102, Asp244, Asp246, and Asp248 each contribute to the Mg(2+) site. A Phosphoserine modification is found at Ser102.

It belongs to the phosphohexose mutase family. The cofactor is Mg(2+). Activated by phosphorylation.

It catalyses the reaction alpha-D-glucosamine 1-phosphate = D-glucosamine 6-phosphate. In terms of biological role, catalyzes the conversion of glucosamine-6-phosphate to glucosamine-1-phosphate. This is Phosphoglucosamine mutase from Bartonella bacilliformis (strain ATCC 35685 / KC583 / Herrer 020/F12,63).